The following is a 284-amino-acid chain: Tropomyosin (284 aa).

Residues 1–280 (MDAIKKKMQA…SDELDQTFAE (280 aa)) are a coiled coil.

The protein belongs to the tropomyosin family. In terms of assembly, homodimer.

Its function is as follows. Tropomyosin, in association with the troponin complex, plays a central role in the calcium dependent regulation of muscle contraction. This Sinonovacula constricta (Razor clam) protein is Tropomyosin.